The following is a 114-amino-acid chain: Histone H3-5 (114 aa).

Residues 1–29 (NTGAKAPRKQLANKAARKSTNVNAVSGVK) form a disordered region.

It belongs to the histone H3 family. As to quaternary structure, the nucleosome is a histone octamer containing two molecules each of H2A, H2B, H3 and H4 assembled in one H3-H4 heterotetramer and two H2A-H2B heterodimers. The octamer wraps approximately 147 bp of DNA.

The protein resides in the nucleus. The protein localises to the chromosome. In terms of biological role, core component of nucleosome. Nucleosomes wrap and compact DNA into chromatin, limiting DNA accessibility to the cellular machineries which require DNA as a template. Histones thereby play a central role in transcription regulation, DNA repair, DNA replication and chromosomal stability. DNA accessibility is regulated via a complex set of post-translational modifications of histones, also called histone code, and nucleosome remodeling. The chain is Histone H3-5 (H3-5) from Stylonychia lemnae (Ciliate).